The chain runs to 469 residues: Neuraminidase (469 aa).

At 1–9 the chain is on the intravirion side; it reads MNPNQKIIT. A helical transmembrane segment spans residues 10 to 30; sequence IGSVSLTIATICFLMQIAILV. Residues 11-33 are involved in apical transport and lipid raft association; sequence GSVSLTIATICFLMQIAILVTTV. Topologically, residues 31 to 469 are virion surface; sequence TTVTLHFKQY…DGADINLMPI (439 aa). Positions 36–88 are hypervariable stalk region; the sequence is HFKQYECDSPANNQVMPCEPIIIERNITEIVYLTNTTIEKEICPKLVEYRNWS. Residues N61, N70, and N86 are each glycosylated (N-linked (GlcNAc...) asparagine; by host). Residues 91-469 form a head of neuraminidase region; that stretch reads QCKITGFAPF…DGADINLMPI (379 aa). Intrachain disulfides connect C92-C417, C124-C129, C183-C230, C232-C237, C278-C291, C280-C289, C318-C337, and C421-C447. R118 contacts substrate. The N-linked (GlcNAc...) asparagine; by host glycan is linked to N146. Residue D151 is the Proton donor/acceptor of the active site. Position 152 (R152) interacts with substrate. N200 and N234 each carry an N-linked (GlcNAc...) asparagine; by host glycan. 276-277 lines the substrate pocket; the sequence is EE. R292 contacts substrate. Ca(2+)-binding residues include D293, G297, and D324. R371 is a binding site for substrate. A glycan (N-linked (GlcNAc...) asparagine; by host) is linked at N402. The active-site Nucleophile is Y406.

Belongs to the glycosyl hydrolase 34 family. In terms of assembly, homotetramer. Ca(2+) is required as a cofactor. In terms of processing, N-glycosylated.

Its subcellular location is the virion membrane. The protein localises to the host apical cell membrane. It catalyses the reaction Hydrolysis of alpha-(2-&gt;3)-, alpha-(2-&gt;6)-, alpha-(2-&gt;8)- glycosidic linkages of terminal sialic acid residues in oligosaccharides, glycoproteins, glycolipids, colominic acid and synthetic substrates.. With respect to regulation, inhibited by the neuraminidase inhibitors zanamivir (Relenza) and oseltamivir (Tamiflu). These drugs interfere with the release of progeny virus from infected cells and are effective against all influenza strains. Resistance to neuraminidase inhibitors is quite rare. Catalyzes the removal of terminal sialic acid residues from viral and cellular glycoconjugates. Cleaves off the terminal sialic acids on the glycosylated HA during virus budding to facilitate virus release. Additionally helps virus spread through the circulation by further removing sialic acids from the cell surface. These cleavages prevent self-aggregation and ensure the efficient spread of the progeny virus from cell to cell. Otherwise, infection would be limited to one round of replication. Described as a receptor-destroying enzyme because it cleaves a terminal sialic acid from the cellular receptors. May facilitate viral invasion of the upper airways by cleaving the sialic acid moieties on the mucin of the airway epithelial cells. Likely to plays a role in the budding process through its association with lipid rafts during intracellular transport. May additionally display a raft-association independent effect on budding. Plays a role in the determination of host range restriction on replication and virulence. Sialidase activity in late endosome/lysosome traffic seems to enhance virus replication. The chain is Neuraminidase from Aves (whales).